The sequence spans 292 residues: GTP cyclohydrolase FolE2 (292 aa).

Belongs to the GTP cyclohydrolase IV family.

The enzyme catalyses GTP + H2O = 7,8-dihydroneopterin 3'-triphosphate + formate + H(+). It participates in cofactor biosynthesis; 7,8-dihydroneopterin triphosphate biosynthesis; 7,8-dihydroneopterin triphosphate from GTP: step 1/1. Its function is as follows. Converts GTP to 7,8-dihydroneopterin triphosphate. The sequence is that of GTP cyclohydrolase FolE2 from Staphylococcus aureus (strain MRSA252).